The following is a 122-amino-acid chain: Large ribosomal subunit protein uL14 (122 aa).

It belongs to the universal ribosomal protein uL14 family. As to quaternary structure, part of the 50S ribosomal subunit. Forms a cluster with proteins L3 and L19. In the 70S ribosome, L14 and L19 interact and together make contacts with the 16S rRNA in bridges B5 and B8.

Its function is as follows. Binds to 23S rRNA. Forms part of two intersubunit bridges in the 70S ribosome. This chain is Large ribosomal subunit protein uL14, found in Polynucleobacter asymbioticus (strain DSM 18221 / CIP 109841 / QLW-P1DMWA-1) (Polynucleobacter necessarius subsp. asymbioticus).